The following is a 191-amino-acid chain: Fe/S biogenesis protein NfuA (191 aa).

The [4Fe-4S] cluster site is built by Cys-149 and Cys-152.

This sequence belongs to the NfuA family. In terms of assembly, homodimer. [4Fe-4S] cluster serves as cofactor.

Involved in iron-sulfur cluster biogenesis. Binds a 4Fe-4S cluster, can transfer this cluster to apoproteins, and thereby intervenes in the maturation of Fe/S proteins. Could also act as a scaffold/chaperone for damaged Fe/S proteins. The chain is Fe/S biogenesis protein NfuA from Salmonella arizonae (strain ATCC BAA-731 / CDC346-86 / RSK2980).